The following is a 1174-amino-acid chain: Tyrosine-protein phosphatase non-receptor type 21 (1174 aa).

Positions 23–308 (LVARIQLLNN…ARHKFYRLNQ (286 aa)) constitute an FERM domain. A compositionally biased stretch (polar residues) spans 396–423 (SAHSTNSLNNPQPYLQPSPMSSNPSITG). The disordered stretch occupies residues 396–445 (SAHSTNSLNNPQPYLQPSPMSSNPSITGSDVMRPDYLPSHRHSAVIPPSY). Phosphoserine is present on residues serine 577, serine 589, serine 590, serine 637, and serine 673. The disordered stretch occupies residues 673–692 (SQPSVFTERTQREGPEEAEG). The span at 681-692 (RTQREGPEEAEG) shows a compositional bias: basic and acidic residues. Residues serine 710 and serine 711 each carry the phosphoserine modification. Disordered regions lie at residues 711-745 (SEEEEDEDFEEESGARAPPARAREPRPGLAQDPPG) and 769-806 (KRMMDSSPVRTTAEAQRPWRDGLLMPSMSESDLTTSGR). The span at 712-722 (EEEEDEDFEEE) shows a compositional bias: acidic residues. Over residues 796-805 (MSESDLTTSG) the composition is skewed to polar residues. Residues serine 797, serine 799, and serine 804 each carry the phosphoserine modification. Residues 896 to 1167 (VFTEYERILK…TFVYRVLIQF (272 aa)) form the Tyrosine-protein phosphatase domain. Substrate contacts are provided by residues glutamate 1067, 1108–1114 (CSAGVGR), and glutamine 1152. Catalysis depends on cysteine 1108, which acts as the Phosphocysteine intermediate.

It belongs to the protein-tyrosine phosphatase family. Non-receptor class subfamily.

The protein localises to the cytoplasm. It localises to the cytoskeleton. It catalyses the reaction O-phospho-L-tyrosyl-[protein] + H2O = L-tyrosyl-[protein] + phosphate. The chain is Tyrosine-protein phosphatase non-receptor type 21 (PTPN21) from Homo sapiens (Human).